The sequence spans 121 residues: uncharacterized protein (121 aa).

Positions lysine 100 to serine 121 are disordered.

This is an uncharacterized protein from Mycoplasma pneumoniae (strain ATCC 29342 / M129 / Subtype 1) (Mycoplasmoides pneumoniae).